Here is a 218-residue protein sequence, read N- to C-terminus: Ornithine decarboxylase antizyme 2 (218 aa).

It belongs to the ODC antizyme family. Interacts with ODC1 and thereby sterically blocks ODC homodimerization. Expressed ubiquitously in 24 hours embryos, with highest levels in telencephalon, lens, retina, cerebellum and hindbrain primordia.

Its function is as follows. Ornithine decarboxylase (ODC) antizyme protein that negatively regulates ODC activity and intracellular polyamine biosynthesis and uptake in response to increased intracellular polyamine levels. Binds to ODC monomers, inhibiting the assembly of the functional ODC homodimers. Does not target the ODC monomers for degradation, which allows a protein synthesis-independent restoration of ODC activity. The chain is Ornithine decarboxylase antizyme 2 (oaz1b) from Danio rerio (Zebrafish).